The sequence spans 232 residues: 7-cyano-7-deazaguanine synthase (232 aa).

8 to 18 provides a ligand contact to ATP; it reads FSGGQDSTTCL. Positions 189, 198, 201, and 204 each coordinate Zn(2+).

It belongs to the QueC family. Requires Zn(2+) as cofactor.

The enzyme catalyses 7-carboxy-7-deazaguanine + NH4(+) + ATP = 7-cyano-7-deazaguanine + ADP + phosphate + H2O + H(+). Its pathway is purine metabolism; 7-cyano-7-deazaguanine biosynthesis. Its function is as follows. Catalyzes the ATP-dependent conversion of 7-carboxy-7-deazaguanine (CDG) to 7-cyano-7-deazaguanine (preQ(0)). This is 7-cyano-7-deazaguanine synthase from Yersinia enterocolitica serotype O:8 / biotype 1B (strain NCTC 13174 / 8081).